A 1110-amino-acid chain; its full sequence is Coiled-coil domain-containing protein 150 (1110 aa).

Coiled coils occupy residues 122–250 (LENL…TSAS), 288–313 (QDLLAQEQRKNEDLGMTISQLKSDLN), 413–695 (AAHA…KEDN), and 728–1048 (SEIA…EAHR).

The chain is Coiled-coil domain-containing protein 150 (Ccdc150) from Mus musculus (Mouse).